Reading from the N-terminus, the 85-residue chain is Hepcidin (85 aa).

Residues 1–24 (MKTFSVAVAVAVVLAFICLQESSA) form the signal peptide. Positions 25–64 (VPANEEQELEQQIYFADPEMPVESCKMPYYMRENRQGSPA) are excised as a propeptide. Cystine bridges form between cysteine 66-cysteine 83, cysteine 69-cysteine 72, cysteine 70-cysteine 79, and cysteine 73-cysteine 82.

As to quaternary structure, monomer. Expressed in all tissues tested, with highest levels of expression in kidney and lowest levels in liver. Intra-peritoneal injection of lipopolysaccharide results in increased expression in heart, spleen and stomach, but not in kidney or liver.

It localises to the secreted. Its function is as follows. Seems to act as a signaling molecule involved in the maintenance of iron homeostasis. Seems to be required in conjunction with HFE to regulate both intestinal iron absorption and iron storage in macrophages. Has very strong antibacterial activity against the marine Gram-negative bacteria V.alginolyticus (MIC=24 uM), V.fluvialis, V.harveyis (MIC=12 uM) and V.parahaemolyticus (MIC=6 uM). Has antibacterial activity against the Gram-negative bacteria A.hydrophila (MIC=6 uM), E.coli (MIC=24 uM), and E.coli BL21(DE3)plysS (MIC=6 uM), and the Gram-positive bacteria B.cereus (MIC=24 uM), B.subtilis (MIC=6 uM), C.glutamicum (MIC=3 uM), M.luteus (MIC=3 uM), M.lysodeikticus, S.aureus (MIC=6 uM) and S.epidermis (MIC=12 uM). Possesses antifungal activity against A.niger (MIC=24 uM), F.graminearum (MIC24 uM) and F.solani (MIC=24 uM), but lacks antifungal activity against the yeasts P.pastoris GS115 and C.albicans. This chain is Hepcidin, found in Larimichthys crocea (Large yellow croaker).